We begin with the raw amino-acid sequence, 594 residues long: Protein REBELOTE (594 aa).

Over residues 1–13 (MGKLGKKARKFAK) the composition is skewed to basic residues. Disordered stretches follow at residues 1-21 (MGKL…SVEK) and 35-58 (AKRN…PKKR). 3 short sequence motifs (nuclear localization signal) span residues 8-15 (ARKFAKKN), 35-42 (AKRNERHQ), and 512-519 (LKKFHERS). Residues 36-58 (KRNERHQAGDKQEKKVEQQPKKR) are compositionally biased toward basic and acidic residues.

It belongs to the NOC2 family. Interacts with SWA2, NOC2 and NOC3 in both the nucleolus and nucleoplasm. Binds to ENAP1 and OBE1. As to expression, expressed at low levels in roots, shoots, leaves, stems, inflorescences, flowers and siliques, with highest levels dividing tissues.

It localises to the nucleus. The protein resides in the nucleolus. The protein localises to the nucleoplasm. Collaboratively with CYP40/SQN and ULT1, influences floral meristem (FM) determinacy in an AGAMOUS and SUPERMAN-dependent manner, thus contributing to the floral developmental homeostasis. This is Protein REBELOTE from Arabidopsis thaliana (Mouse-ear cress).